The following is a 333-amino-acid chain: MRLKVGLLGGGSWGTTVAAVVSRNAPIQLWARDAETVEGINRDHENRKYLPGITLPPALGATSDMAEVVAGADVLVMAVPSHSFRSVLEEARDHIRPWVPVISLTKGLELASGKRMTELIEDVLPGHPVGVLTGPNLAREIMAGQAAASVLSMADEIVVRALQPLFHSGLFRVYTNTDLLGCELGGVLKNIIAIAVGMGDGLGAGDNTRAGLMTRGLAEITRLGVAMGGRPETFAGLTGMGDLIATCTSPLSRNRHVGVELGKGRPIDAIIAGMNMVAEGVKSAPTVMALADRHGIAMPIARDVFDVTQGKRTAMDVFRGLLKSSVGDEAHPG.

Positions 12, 13, 32, and 106 each coordinate NADPH. The sn-glycerol 3-phosphate site is built by K106 and G134. Residue A138 participates in NADPH binding. Sn-glycerol 3-phosphate is bound by residues K189, D242, S252, R253, and N254. Residue K189 is the Proton acceptor of the active site. An NADPH-binding site is contributed by R253. Residues V277 and E279 each contribute to the NADPH site.

Belongs to the NAD-dependent glycerol-3-phosphate dehydrogenase family.

It is found in the cytoplasm. The catalysed reaction is sn-glycerol 3-phosphate + NAD(+) = dihydroxyacetone phosphate + NADH + H(+). It carries out the reaction sn-glycerol 3-phosphate + NADP(+) = dihydroxyacetone phosphate + NADPH + H(+). It participates in membrane lipid metabolism; glycerophospholipid metabolism. Functionally, catalyzes the reduction of the glycolytic intermediate dihydroxyacetone phosphate (DHAP) to sn-glycerol 3-phosphate (G3P), the key precursor for phospholipid synthesis. The protein is Glycerol-3-phosphate dehydrogenase [NAD(P)+] 2 of Sphingopyxis alaskensis (strain DSM 13593 / LMG 18877 / RB2256) (Sphingomonas alaskensis).